Here is a 242-residue protein sequence, read N- to C-terminus: Uridylate kinase (242 aa).

Residue 11–14 (KLSG) participates in ATP binding. Residues 19-24 (GDKGVG) are involved in allosteric activation by GTP. Residue glycine 53 participates in UMP binding. Positions 54 and 58 each coordinate ATP. Residues aspartate 73 and 134 to 141 (IGSPYFST) contribute to the UMP site. ATP is bound by residues asparagine 162, tyrosine 168, and aspartate 171.

The protein belongs to the UMP kinase family. Homohexamer.

The protein resides in the cytoplasm. It catalyses the reaction UMP + ATP = UDP + ADP. It functions in the pathway pyrimidine metabolism; CTP biosynthesis via de novo pathway; UDP from UMP (UMPK route): step 1/1. Its activity is regulated as follows. Allosterically activated by GTP. Inhibited by UTP. Catalyzes the reversible phosphorylation of UMP to UDP. This Streptococcus agalactiae serotype Ia (strain ATCC 27591 / A909 / CDC SS700) protein is Uridylate kinase.